The following is a 341-amino-acid chain: Anthranilate phosphoribosyltransferase (341 aa).

Residues Gly79, Gly82 to Asp83, Thr87, Asn89 to Thr92, Lys107 to Ser115, and Ser119 contribute to the 5-phospho-alpha-D-ribose 1-diphosphate site. Residue Gly79 coordinates anthranilate. Ser91 serves as a coordination point for Mg(2+). An anthranilate-binding site is contributed by Asn110. An anthranilate-binding site is contributed by Arg165. Residues Asp224 and Glu225 each coordinate Mg(2+).

It belongs to the anthranilate phosphoribosyltransferase family. In terms of assembly, homodimer. The cofactor is Mg(2+).

It catalyses the reaction N-(5-phospho-beta-D-ribosyl)anthranilate + diphosphate = 5-phospho-alpha-D-ribose 1-diphosphate + anthranilate. It participates in amino-acid biosynthesis; L-tryptophan biosynthesis; L-tryptophan from chorismate: step 2/5. In terms of biological role, catalyzes the transfer of the phosphoribosyl group of 5-phosphorylribose-1-pyrophosphate (PRPP) to anthranilate to yield N-(5'-phosphoribosyl)-anthranilate (PRA). This chain is Anthranilate phosphoribosyltransferase, found in Bacillus cereus (strain ZK / E33L).